Reading from the N-terminus, the 830-residue chain is Vacuolar protein sorting-associated protein 11 homolog (830 aa).

Residues 733–775 form an RING-type; atypical zinc finger; it reads CDICREMLSMQSIYFLCQHSFHEECLNYKSTKRQEKFLCIICK.

This sequence belongs to the VPS11 family. Part of the homotypic fusion and vacuole protein sorting (HOPS) complex, composed of Vps16A, car/Vps33A, dor/Vps18, Vps39, Vps11 and lt/Vps41. Unlike in other species, not part of the class C core vacuole/endosome tethering (CORVET) complex.

It localises to the late endosome membrane. The protein resides in the lysosome membrane. Functionally, part of the homotypic fusion and vacuole protein sorting (HOPS) tethering complex involved in endo-lysosomal vesicle trafficking and lysosome biogenesis, but unlike in many other species does not form part of the class C core vacuole/endosome tethering (CORVET) complex. The HOPS complex facilitates docking and fusion of lysosomes with late endosomes and several other types of vesicles. The HOPS complex is also involved in autophagy, pigment granule biogenesis and crinophagy (the elimination of unused secretory granules through fusion with lysosomes). The HOPS complex probably instigates autophagosome-lysosome fusion by binding autophagosome-associated Syx17/syntaxin 17 and promoting assembly of the trans-SNARE complex. Independent of Syx17/syntaxin 17, HOPS is involved in biosynthetic transport to lysosomes and lysosome-related organelles such as eye-pigment granules. Required for autophagocytosis-dependent remodeling of myofibrils and transverse-tubules (T-tubules) during metamorphosis. The sequence is that of Vacuolar protein sorting-associated protein 11 homolog from Drosophila melanogaster (Fruit fly).